Here is a 147-residue protein sequence, read N- to C-terminus: Hemoglobin subunit beta (147 aa).

Val2 bears the N-acetylvaline mark. The Globin domain occupies 3-147 (HLTGEEKAAV…VANALAHKYH (145 aa)). Thr13 is modified (phosphothreonine). Ser45 is modified (phosphoserine). At Lys60 the chain carries N6-acetyllysine. A heme b-binding site is contributed by His64. N6-acetyllysine is present on Lys83. Heme b is bound at residue His93. Cys94 is modified (S-nitrosocysteine). An N6-acetyllysine modification is found at Lys145.

Belongs to the globin family. Heterotetramer of two alpha chains and two beta chains. In terms of tissue distribution, red blood cells.

Its function is as follows. Involved in oxygen transport from the lung to the various peripheral tissues. This Aotus azarae (Azara's night monkey) protein is Hemoglobin subunit beta (HBB).